The following is a 247-amino-acid chain: MLKATIDAEIFRESIDAIAALVTECRLHTAEDQIRTRSVDTANVAMVSLELQSTAFNSFSATAGELGLDIAKMKNIIGMMGKGDALTLTLLDEERKLELSFGGYRYSISLLDVNTIRKDPNPPGIDLPGKAVVPGDALNNAIKAAAVISDKIALGIDPDAMTFYMEAEGDTDHIKLALGEDELVALSPVQARSLFSIDYLKDMGRVMARADKVEVYLGIDHPVRFVFDIADGNGRVEYLLAPRIEAD.

It belongs to the PCNA family. As to quaternary structure, homotrimer. The subunits circularize to form a toroid; DNA passes through its center. Replication factor C (RFC) is required to load the toroid on the DNA.

Its function is as follows. Sliding clamp subunit that acts as a moving platform for DNA processing. Responsible for tethering the catalytic subunit of DNA polymerase and other proteins to DNA during high-speed replication. This chain is DNA polymerase sliding clamp, found in Methanoculleus marisnigri (strain ATCC 35101 / DSM 1498 / JR1).